An 835-amino-acid polypeptide reads, in one-letter code: Involucrin (835 aa).

The segment covering 1–15 (MSQQHTLPVTLSPAL) has biased composition (polar residues). Disordered stretches follow at residues 1–133 (MSQQ…LDQR), 150–206 (EQLL…LEVP), 221–285 (GQLK…QLKH), 321–342 (GQLKHLDQQEGQLELPEQQEGQ), 381–428 (GQLK…VPEE), 446–486 (LDQQ…LEVP), 501–548 (GQLK…VPEE), and 566–809 (LDQQ…QPAL). Over residues 76 to 91 (EQQQQEPQEQELQQQH) the composition is skewed to low complexity. 2 stretches are compositionally biased toward basic and acidic residues: residues 92 to 115 (WEQHEEHQKAENPEQQLKQEKAQR) and 159 to 168 (QEQHLKHLEQ). The segment covering 169 to 181 (QEGQLELPEQQEG) has biased composition (low complexity). 2 stretches are compositionally biased toward basic and acidic residues: residues 182–198 (QLKHLEQQEGQLKHLEQ) and 222–268 (QLKH…HLDQ). Composition is skewed to low complexity over residues 269-281 (QEGQLELPEQQEG), 329-341 (QEGQLELPEQQEG), and 389-401 (QEGQLELPEQQEG). Basic and acidic residues-rich tracts occupy residues 402–421 (QLKHLEQQEGQLKHLEHQEG) and 446–464 (LDQQEGQLKHLDQQEKQLE). The span at 509–521 (QEGQLELPEQQEG) shows a compositional bias: low complexity. 3 stretches are compositionally biased toward basic and acidic residues: residues 522–541 (QLKHLEQQEGQLKHLEHQEG), 566–584 (LDQQEGQLKHLDQQEKQLE), and 594–620 (KHLEQQEGQLEHLEGQEGQLEHLEHQE). Residues 655–668 (HLVQQEGQLEQQEG) show a composition bias toward low complexity. Basic and acidic residues predominate over residues 669-685 (QVEHLEEQVGQLKHLEE). Residues 693-710 (LEQQQGQLEVPEQQVGQP) show a composition bias toward low complexity. Basic and acidic residues-rich tracts occupy residues 711–721 (KHLEQEEKQLE), 729–738 (QLKHLEKQEA), and 751–775 (KHLEQQEKQLEHPEQKDGQLKHLEQ). Residues 776-789 (QEGQLKNLEQQKGQ) show a composition bias toward polar residues.

Belongs to the involucrin family. Directly or indirectly cross-linked to cornifelin (CNFN). Substrate of transglutaminase. Specific glutamines or lysines are cross-linked to keratins, desmoplakin and to inter involucrin molecules. Keratinocytes of epidermis and other stratified squamous epithelia.

The protein resides in the cytoplasm. In terms of biological role, part of the insoluble cornified cell envelope (CE) of stratified squamous epithelia. The polypeptide is Involucrin (IVL) (Pongo pygmaeus (Bornean orangutan)).